Here is a 708-residue protein sequence, read N- to C-terminus: Ubiquitin thioesterase ZRANB1 (708 aa).

A RanBP2-type 1 zinc finger spans residues 3–33; the sequence is ERGIKWACEYCTYENWPSAIKCTMCRAQRPS. Zn(2+)-binding residues include Cys10, Cys13, Cys24, and Cys27. Residues 38–73 are disordered; the sequence is TEDPFKSGSSDVGRDWDPSSTEGGSSPLICPDSSAR. 2 RanBP2-type zinc fingers span residues 84–113 and 149–178; these read NANK…QRRT and RTQH…PRPN. Zn(2+)-binding residues include Cys90, Cys93, Cys104, Cys107, Cys155, Cys158, Cys169, and Cys172. The interval 200-223 is disordered; sequence RARWRGSCSSGNSQRRSPPTMKRD. Positions 206 to 216 are enriched in polar residues; sequence SCSSGNSQRRS. 2 ANK repeats span residues 260 to 290 and 313 to 340; these read KKTD…SGGD and YTLV…QQAA. The OTU domain maps to 432–592; that stretch reads LYALWNRTAG…RGHFSALVAM (161 aa). The active-site Nucleophile is the Cys443. His585 (proton acceptor) is an active-site residue.

This sequence belongs to the peptidase C64 family. As to quaternary structure, interacts with TRAF6. Interacts with APC.

Its subcellular location is the cytoplasm. The protein resides in the nucleus. It carries out the reaction Thiol-dependent hydrolysis of ester, thioester, amide, peptide and isopeptide bonds formed by the C-terminal Gly of ubiquitin (a 76-residue protein attached to proteins as an intracellular targeting signal).. In terms of biological role, ubiquitin thioesterase, which specifically hydrolyzes 'Lys-29'-linked and 'Lys-33'-linked diubiquitin. Also cleaves 'Lys-63'-linked chains, but with 40-fold less efficiency compared to 'Lys-29'-linked ones. Positive regulator of the Wnt signaling pathway that deubiquitinates APC protein, a negative regulator of Wnt-mediated transcription. Acts as a regulator of autophagy by mediating deubiquitination of PIK3C3/VPS34, thereby promoting autophagosome maturation. Plays a role in the regulation of cell morphology and cytoskeletal organization. Required in the stress fiber dynamics and cell migration. This chain is Ubiquitin thioesterase ZRANB1, found in Bos taurus (Bovine).